The primary structure comprises 105 residues: QPKSSPSVTLFPPSSEELETNKATLVCTITDFYPGVVTVDWKVDGTPVTQGMETTQPSKQSNNKYMASSYLTLTARAWERHSSYSCQVTHEGHTVEKSLSRADCS.

The Ig-like domain maps to 6-100 (PSVTLFPPSS…EGHTVEKSLS (95 aa)). Cysteine 27 and cysteine 86 form a disulfide bridge.

This is Ig lambda-1 chain C region from Mus musculus (Mouse).